A 647-amino-acid polypeptide reads, in one-letter code: Chaperone protein DnaK (647 aa).

At Thr-198 the chain carries Phosphothreonine; by autocatalysis. The interval 606–634 is disordered; the sequence is GASAEGMDPNQFQQGADNAGESNQADDDV. Residues 615–628 show a composition bias toward polar residues; it reads NQFQQGADNAGESN.

This sequence belongs to the heat shock protein 70 family.

Acts as a chaperone. The sequence is that of Chaperone protein DnaK from Psychrobacter cryohalolentis (strain ATCC BAA-1226 / DSM 17306 / VKM B-2378 / K5).